Reading from the N-terminus, the 62-residue chain is Metallothionein-like protein 3A (62 aa).

Belongs to the metallothionein superfamily. Type 15 family.

In terms of biological role, metallothioneins have a high content of cysteine residues that bind various heavy metals. In Oryza sativa subsp. indica (Rice), this protein is Metallothionein-like protein 3A (MT3A).